The chain runs to 45 residues: Large ribosomal subunit protein bL34 (45 aa).

Residues 1–10 (MTQRTLGGTN) show a composition bias toward polar residues. Positions 1 to 45 (MTQRTLGGTNRKQKRTSGFRARMRTHNGRKVIQARRSKGRHRLAV) are disordered. Residues 11–45 (RKQKRTSGFRARMRTHNGRKVIQARRSKGRHRLAV) are compositionally biased toward basic residues.

This sequence belongs to the bacterial ribosomal protein bL34 family.

The protein is Large ribosomal subunit protein bL34 (rpmH) of Synechocystis sp. (strain ATCC 27184 / PCC 6803 / Kazusa).